Reading from the N-terminus, the 125-residue chain is MPPAVSVCASSGISVLRKRSDFLKAARARRQGAGSMMVQARKRDAGEAEGIRVGFTCSKKVGNAVARNRAKRRLREAARLVLPDMGRPGWDYVLIGRPSDTASRPFDGLLDDLRRALRKLHAPKP.

It belongs to the RnpA family. As to quaternary structure, consists of a catalytic RNA component (M1 or rnpB) and a protein subunit.

It catalyses the reaction Endonucleolytic cleavage of RNA, removing 5'-extranucleotides from tRNA precursor.. Functionally, RNaseP catalyzes the removal of the 5'-leader sequence from pre-tRNA to produce the mature 5'-terminus. It can also cleave other RNA substrates such as 4.5S RNA. The protein component plays an auxiliary but essential role in vivo by binding to the 5'-leader sequence and broadening the substrate specificity of the ribozyme. This chain is Ribonuclease P protein component, found in Ruegeria pomeroyi (strain ATCC 700808 / DSM 15171 / DSS-3) (Silicibacter pomeroyi).